Reading from the N-terminus, the 675-residue chain is Sodium/myo-inositol cotransporter 2 (675 aa).

Residues 1–27 (MESGTSSPQPPQLDPLDAFPQKGLEPG) are Extracellular-facing. Residues 28–48 (DIAVLVLYFLFVLAVGLWSTV) form a helical membrane-spanning segment. Residues 49–65 (KTKRDTVKGYFLAGGDM) lie on the Cytoplasmic side of the membrane. A helical membrane pass occupies residues 66 to 88 (VWWPVGASLFASNVGSGHFIGLA). The Extracellular segment spans residues 89–102 (GSGAATGISVSAYE). The chain crosses the membrane as a helical span at residues 103–123 (LNGLFSVLMLAWIFLPIYIAG). Topologically, residues 124-135 (QVTTMPEYLRKR) are cytoplasmic. The helical transmembrane segment at 136–156 (FGGIRIPIILAVLYLFIYIFT) threads the bilayer. Over 157-180 (KISVDMYAGAIFIQQSLHLDLYLA) the chain is Extracellular. The chain crosses the membrane as a helical span at residues 181–201 (IVGLLAITAVYTVAGGLAAVI). The Cytoplasmic portion of the chain corresponds to 202–208 (YTDALQT). The chain crosses the membrane as a helical span at residues 209 to 229 (LIMLIGALTLMGYSFAAVGGM). At 230–272 (EGLKEKYFLALASNRSENSSCGLPREDAFHIFRDPLTSDLPWP) the chain is on the extracellular side. Residues 273–293 (GVLFGMSIPSLWYWCTDQVIV) traverse the membrane as a helical segment. Residues 294 to 308 (QRTLAAKNLSHAKGG) are Cytoplasmic-facing. Residues 309 to 329 (ALMAAYLKVLPLFIMVFPGMV) traverse the membrane as a helical segment. Topologically, residues 330–375 (SRILFPDQVACADPEICQKICSNPSGCSDIAYPKLVLELLPTGLRG) are extracellular. Residues 376–396 (LMMAVMVAALMSSLTSIFNSA) form a helical membrane-spanning segment. The Cytoplasmic segment spans residues 397–418 (STIFTMDLWNHLRPRASEKELM). A helical membrane pass occupies residues 419–439 (IVGRVFVLLLVLVSILWIPVV). Over 440–446 (QASQGGQ) the chain is Extracellular. The chain crosses the membrane as a helical span at residues 447 to 467 (LFIYIQSISSYLQPPVAVVFI). Over 468 to 479 (MGCFWKRTNEKG) the chain is Cytoplasmic. A helical membrane pass occupies residues 480–500 (AFWGLISGLLLGLVRLVLDFI). At 501 to 521 (YVQPRCDQPDERPVLVKSIHY) the chain is on the extracellular side. A helical membrane pass occupies residues 522–542 (LYFSMILSTVTLITVSTVSWF). Topologically, residues 543–654 (TEPPSKEMVS…SLEENPLVKT (112 aa)) are cytoplasmic. A helical membrane pass occupies residues 655–675 (LLDVNLIFCVSCAIFIWGYFA).

The protein belongs to the sodium:solute symporter (SSF) (TC 2.A.21) family. As to expression, highest expression in heart, skeletal muscle, kidney, liver and placenta. Weaker expression in brain, colon, spleen, lung and peripheral blood leukocytes.

It is found in the membrane. Its subcellular location is the apical cell membrane. It carries out the reaction myo-inositol(out) + 2 Na(+)(out) = myo-inositol(in) + 2 Na(+)(in). It catalyses the reaction 1D-chiro-inositol(out) + 2 Na(+)(out) = 1D-chiro-inositol(in) + 2 Na(+)(in). The catalysed reaction is D-glucose(out) + 2 Na(+)(out) = D-glucose(in) + 2 Na(+)(in). The enzyme catalyses D-xylose(out) + 2 Na(+)(out) = D-xylose(in) + 2 Na(+)(in). Its activity is regulated as follows. MI transport activity inhibited by D-chiro-inositol (DCI), phlorizin (Pz) and sodium (Na(+)). Insulin increases D-chiro-inositol uptake. Involved in the sodium-dependent cotransport of myo-inositol (MI) with a Na(+):MI stoichiometry of 2:1. Exclusively responsible for apical MI transport and absorption in intestine. Can also transport D-chiro-inositol (DCI) but not L-fucose. Exhibits stereospecific cotransport of both D-glucose and D-xylose. May induce apoptosis through the TNF-alpha, PDCD1 pathway. May play a role in the regulation of MI concentration in serum, involving reabsorption in at least the proximal tubule of the kidney. In Homo sapiens (Human), this protein is Sodium/myo-inositol cotransporter 2.